The primary structure comprises 158 residues: SsrA-binding protein (158 aa).

The protein belongs to the SmpB family.

The protein resides in the cytoplasm. Required for rescue of stalled ribosomes mediated by trans-translation. Binds to transfer-messenger RNA (tmRNA), required for stable association of tmRNA with ribosomes. tmRNA and SmpB together mimic tRNA shape, replacing the anticodon stem-loop with SmpB. tmRNA is encoded by the ssrA gene; the 2 termini fold to resemble tRNA(Ala) and it encodes a 'tag peptide', a short internal open reading frame. During trans-translation Ala-aminoacylated tmRNA acts like a tRNA, entering the A-site of stalled ribosomes, displacing the stalled mRNA. The ribosome then switches to translate the ORF on the tmRNA; the nascent peptide is terminated with the 'tag peptide' encoded by the tmRNA and targeted for degradation. The ribosome is freed to recommence translation, which seems to be the essential function of trans-translation. The protein is SsrA-binding protein of Hydrogenovibrio crunogenus (strain DSM 25203 / XCL-2) (Thiomicrospira crunogena).